The following is a 288-amino-acid chain: Small ribosomal subunit protein uS3 (288 aa).

The region spanning 39–107 (VREYLKAKLK…PVAVNIEEVR (69 aa)) is the KH type-2 domain. Residues 209–288 (GRNDLPAAET…AAAAADGKGE (80 aa)) form a disordered region. Residues 219 to 238 (PRPEEERRPRGPRRDGRPGD) show a composition bias toward basic and acidic residues. Low complexity predominate over residues 277-288 (APAAAAADGKGE).

The protein belongs to the universal ribosomal protein uS3 family. As to quaternary structure, part of the 30S ribosomal subunit. Forms a tight complex with proteins S10 and S14.

Binds the lower part of the 30S subunit head. Binds mRNA in the 70S ribosome, positioning it for translation. This is Small ribosomal subunit protein uS3 from Acidovorax sp. (strain JS42).